The sequence spans 628 residues: tRNA uridine 5-carboxymethylaminomethyl modification enzyme MnmG (628 aa).

Position 13-18 (13-18 (GAGHAG)) interacts with FAD. 273–287 (GPRYCPSIEDKIVRF) contacts NAD(+).

Belongs to the MnmG family. As to quaternary structure, homodimer. Heterotetramer of two MnmE and two MnmG subunits. FAD is required as a cofactor.

It localises to the cytoplasm. NAD-binding protein involved in the addition of a carboxymethylaminomethyl (cmnm) group at the wobble position (U34) of certain tRNAs, forming tRNA-cmnm(5)s(2)U34. This Buchnera aphidicola subsp. Acyrthosiphon pisum (strain 5A) protein is tRNA uridine 5-carboxymethylaminomethyl modification enzyme MnmG.